A 241-amino-acid polypeptide reads, in one-letter code: MADS-box transcription factor 57 (241 aa).

An MADS-box domain is found at 1-61 (MGRGKIVIRR…GRLYEFSSTN (61 aa)). Residues 85–178 (IKIWQREAAS…LNVMSQQKLE (94 aa)) form the K-box domain. Residues 216–241 (LELSQSQQREGECSKTAAPELGLHLP) form a disordered region.

In terms of assembly, interacts with TB1. Expressed in seedling roots and shoots. Highly expressed in young leaves.

The protein localises to the nucleus. Transcriptional factor that targets the CArG motif 5'-C(A/T)TTAAAAAG-3' in the promoter of D14. Directly suppresses D14 expression to control the outgrowth of axillary buds. The chain is MADS-box transcription factor 57 from Oryza sativa subsp. japonica (Rice).